A 264-amino-acid polypeptide reads, in one-letter code: Thymidylate synthase (264 aa).

Arg-21 lines the dUMP pocket. A (6R)-5,10-methylene-5,6,7,8-tetrahydrofolate-binding site is contributed by His-51. 126–127 lines the dUMP pocket; sequence RR. The active-site Nucleophile is the Cys-146. DUMP is bound by residues 166-169, Asn-177, and 207-209; these read RSCD and HLY. (6R)-5,10-methylene-5,6,7,8-tetrahydrofolate is bound at residue Asp-169. Ala-263 provides a ligand contact to (6R)-5,10-methylene-5,6,7,8-tetrahydrofolate.

It belongs to the thymidylate synthase family. Bacterial-type ThyA subfamily. Homodimer.

It is found in the cytoplasm. The catalysed reaction is dUMP + (6R)-5,10-methylene-5,6,7,8-tetrahydrofolate = 7,8-dihydrofolate + dTMP. It functions in the pathway pyrimidine metabolism; dTTP biosynthesis. Its function is as follows. Catalyzes the reductive methylation of 2'-deoxyuridine-5'-monophosphate (dUMP) to 2'-deoxythymidine-5'-monophosphate (dTMP) while utilizing 5,10-methylenetetrahydrofolate (mTHF) as the methyl donor and reductant in the reaction, yielding dihydrofolate (DHF) as a by-product. This enzymatic reaction provides an intracellular de novo source of dTMP, an essential precursor for DNA biosynthesis. The chain is Thymidylate synthase from Shewanella sp. (strain MR-4).